The sequence spans 70 residues: Small ribosomal subunit protein bS21 (70 aa).

The protein belongs to the bacterial ribosomal protein bS21 family.

The chain is Small ribosomal subunit protein bS21 from Herminiimonas arsenicoxydans.